Reading from the N-terminus, the 164-residue chain is Hydroxylaminobenzene mutase HabB (164 aa).

4 consecutive transmembrane segments (helical) span residues 16–36 (LLQL…LLPM), 50–70 (GVLN…LSLG), 78–98 (FGFA…AGFW), and 121–141 (LIAF…ALAL).

Its subcellular location is the cell membrane. The enzyme catalyses N-phenylhydroxylamine = 2-aminophenol. Addition of ZnSO(4) decreases the activity to 70%. Catalyzes the rearrangement of hydroxylaminobenzene to 2-aminophenol. This is Hydroxylaminobenzene mutase HabB (habB) from Ectopseudomonas oleovorans (Pseudomonas oleovorans).